The sequence spans 99 residues: Large ribosomal subunit protein uL23 (99 aa).

It belongs to the universal ribosomal protein uL23 family. Part of the 50S ribosomal subunit. Contacts protein L29, and trigger factor when it is bound to the ribosome.

Functionally, one of the early assembly proteins it binds 23S rRNA. One of the proteins that surrounds the polypeptide exit tunnel on the outside of the ribosome. Forms the main docking site for trigger factor binding to the ribosome. The protein is Large ribosomal subunit protein uL23 of Leifsonia xyli subsp. xyli (strain CTCB07).